We begin with the raw amino-acid sequence, 68 residues long: Large ribosomal subunit protein uL29 (68 aa).

It belongs to the universal ribosomal protein uL29 family.

This is Large ribosomal subunit protein uL29 from Rhodopseudomonas palustris (strain BisA53).